The sequence spans 239 residues: Ribosomal RNA small subunit methyltransferase G (239 aa).

S-adenosyl-L-methionine-binding positions include G78, F83, 129–130 (AE), and R148.

It belongs to the methyltransferase superfamily. RNA methyltransferase RsmG family.

It localises to the cytoplasm. Its function is as follows. Specifically methylates the N7 position of a guanine in 16S rRNA. In Clostridium beijerinckii (strain ATCC 51743 / NCIMB 8052) (Clostridium acetobutylicum), this protein is Ribosomal RNA small subunit methyltransferase G.